The chain runs to 74 residues: UPF0741 protein BcerKBAB4_5177 (74 aa).

This sequence belongs to the UPF0741 family.

This is UPF0741 protein BcerKBAB4_5177 from Bacillus mycoides (strain KBAB4) (Bacillus weihenstephanensis).